The chain runs to 177 residues: Nucleoside triphosphate/diphosphate phosphatase (177 aa).

Catalysis depends on Arg-23, which acts as the Proton donor. 6 residues coordinate Mg(2+): Asn-87, Asp-103, Asp-105, Asp-107, Asp-120, and Glu-123.

This sequence belongs to the Ntdp family. Mg(2+) is required as a cofactor.

It carries out the reaction a ribonucleoside 5'-triphosphate + H2O = a ribonucleoside 5'-diphosphate + phosphate + H(+). The enzyme catalyses a ribonucleoside 5'-diphosphate + H2O = a ribonucleoside 5'-phosphate + phosphate + H(+). In terms of biological role, has nucleoside phosphatase activity towards nucleoside triphosphates and nucleoside diphosphates. This chain is Nucleoside triphosphate/diphosphate phosphatase, found in Streptococcus thermophilus (strain ATCC BAA-491 / LMD-9).